A 358-amino-acid polypeptide reads, in one-letter code: Envelope glycoprotein K (358 aa).

Residues 1–33 (MSRVQCLRLAAVIASISHLIFLVWFVCWNSVLE) form the signal peptide. Residues 34–141 (NNEDCVYATR…LEMADCMAYL (108 aa)) are Extracellular-facing. N-linked (GlcNAc...) asparagine; by host glycans are attached at residues Asn-57 and Asn-80. The helical transmembrane segment at 142–162 (WFFQVRTATAALLMYLAFLCV) threads the bilayer. Over 163–235 (NRQRRGFGPW…DTLGFYLMHP (73 aa)) the chain is Cytoplasmic. A helical membrane pass occupies residues 236-256 (LALLLRAIETILYFASLVASA). Residues 257-273 (TVLRVNFDPCSVVLPNH) are Extracellular-facing. A helical transmembrane segment spans residues 274-294 (VKVFAWVFVAALGALEVVSAI). The Cytoplasmic portion of the chain corresponds to 295–323 (DHLRRETRSARDAAAVIRPTNIIAACCAN). The helical transmembrane segment at 324–344 (IISHVLLRMLYGAALVLVVIG) threads the bilayer. Over 345–358 (ALKYEREIQTRLLG) the chain is Extracellular.

Belongs to the alphaherpesvirinae glycoprotein K family. In terms of assembly, interacts (via UL20 interaction region) with protein UL20 (via N-terminus); this interaction probably plays a role in the coordinate transport of protein UL20 and gK to the trans-Golgi network (TGN), and is required for the cell surface expression of gK.

The protein resides in the host cell membrane. It localises to the host endosome membrane. It is found in the host Golgi apparatus membrane. Functionally, glycoprotein that probably modulates membrane fusion events during secondary envelopment of cytoplasmic capsids that bud into specific trans-Golgi network (TGN)-derived membranes. Also plays a role, together with gB, in virus-induced cell-to-cell fusion (syncytia formation). Seems to block fusion of virions with infected-cell membranes. This Psittacid herpesvirus 1 (isolate Amazon parrot/-/97-0001/1997) (PsHV-1) protein is Envelope glycoprotein K (gK).